We begin with the raw amino-acid sequence, 239 residues long: Transcriptional activatory protein AadR (239 aa).

Isoleucine 27–glutamine 149 is an a nucleoside 3',5'-cyclic phosphate binding site. The HTH crp-type domain maps to arginine 158–lysine 231. The segment at residues arginine 191–threonine 210 is a DNA-binding region (H-T-H motif).

Functionally, transcriptional activator of anaerobic gene expression. For aromatic acid degradation. Also required for the anaerobic degradation of benzoate. The chain is Transcriptional activatory protein AadR (aadR) from Rhodopseudomonas palustris (strain ATCC BAA-98 / CGA009).